A 71-amino-acid polypeptide reads, in one-letter code: Sec-independent protein translocase protein TatA (71 aa).

A helical membrane pass occupies residues 1–21 (MGSFSMWHWLIVLAIVLLLFG). Residues 40–71 (KKGMSDDDTAPDGTPKPADQSKTVDHRADDHK) form a disordered region. Residues 61-71 (KTVDHRADDHK) are compositionally biased toward basic and acidic residues.

The protein belongs to the TatA/E family. The Tat system comprises two distinct complexes: a TatABC complex, containing multiple copies of TatA, TatB and TatC subunits, and a separate TatA complex, containing only TatA subunits. Substrates initially bind to the TatABC complex, which probably triggers association of the separate TatA complex to form the active translocon.

The protein resides in the cell inner membrane. Functionally, part of the twin-arginine translocation (Tat) system that transports large folded proteins containing a characteristic twin-arginine motif in their signal peptide across membranes. TatA could form the protein-conducting channel of the Tat system. This Allorhizobium ampelinum (strain ATCC BAA-846 / DSM 112012 / S4) (Agrobacterium vitis (strain S4)) protein is Sec-independent protein translocase protein TatA.